The sequence spans 562 residues: ATP-dependent RNA helicase dbp2 (562 aa).

The Q motif signature appears at 132 to 160 (ETFDEAGFPRYVMDEVKAQGFPAPTAIQS). The 176-residue stretch at 163–338 (WPMALSGRDV…ADFLTDFIQV (176 aa)) folds into the Helicase ATP-binding domain. 176–183 (AETGSGKT) lines the ATP pocket. The short motif at 286–289 (DEAD) is the DEAD box element. A Helicase C-terminal domain is found at 370 to 515 (HLEKIMEGRE…QIDPRLAEMA (146 aa)). Residues 526 to 548 (GGYRGRGGGGWRGGRGGGGGGGS) are RNA-binding RGG-box. A compositionally biased stretch (gly residues) spans 536–550 (WRGGRGGGGGGGSVG). The tract at residues 536 to 562 (WRGGRGGGGGGGSVGGANALPLNNRRW) is disordered.

This sequence belongs to the DEAD box helicase family. DDX5/DBP2 subfamily. As to quaternary structure, associates with polysomes.

It is found in the cytoplasm. The protein localises to the nucleus. The catalysed reaction is ATP + H2O = ADP + phosphate + H(+). In terms of biological role, ATP-dependent RNA helicase involved nonsense-mediated mRNA decay and ribosome biogenesis through rRNA processing. The chain is ATP-dependent RNA helicase dbp2 (drh-1) from Neurospora crassa (strain ATCC 24698 / 74-OR23-1A / CBS 708.71 / DSM 1257 / FGSC 987).